A 275-amino-acid chain; its full sequence is NH(3)-dependent NAD(+) synthetase (275 aa).

46–53 is an ATP binding site; that stretch reads GISGGQDS. Asp52 is a Mg(2+) binding site. Arg141 lines the deamido-NAD(+) pocket. Thr161 is an ATP binding site. Residue Glu166 coordinates Mg(2+). 2 residues coordinate deamido-NAD(+): Lys174 and Asp181. Positions 190 and 212 each coordinate ATP. A deamido-NAD(+)-binding site is contributed by 261–262; the sequence is HK.

Belongs to the NAD synthetase family. In terms of assembly, homodimer.

It catalyses the reaction deamido-NAD(+) + NH4(+) + ATP = AMP + diphosphate + NAD(+) + H(+). It participates in cofactor biosynthesis; NAD(+) biosynthesis; NAD(+) from deamido-NAD(+) (ammonia route): step 1/1. Catalyzes the ATP-dependent amidation of deamido-NAD to form NAD. Uses ammonia as a nitrogen source. This chain is NH(3)-dependent NAD(+) synthetase, found in Limosilactobacillus reuteri (strain DSM 20016) (Lactobacillus reuteri).